Reading from the N-terminus, the 356-residue chain is Protein RecA (356 aa).

An ATP-binding site is contributed by 75–82 (GPESSGKT).

The protein belongs to the RecA family.

The protein resides in the cytoplasm. Functionally, can catalyze the hydrolysis of ATP in the presence of single-stranded DNA, the ATP-dependent uptake of single-stranded DNA by duplex DNA, and the ATP-dependent hybridization of homologous single-stranded DNAs. It interacts with LexA causing its activation and leading to its autocatalytic cleavage. In Burkholderia mallei (strain ATCC 23344), this protein is Protein RecA.